We begin with the raw amino-acid sequence, 552 residues long: Putative transport protein PBPRA2144 (552 aa).

Transmembrane regions (helical) follow at residues 4-24 (IALS…IGNW), 26-46 (ICGV…VGHF), 65-85 (FGLI…FFAS), 95-115 (AFAA…YKIF), and 158-178 (MGYA…MWIL). RCK C-terminal domains lie at 188-276 (KEAE…VIGE) and 279-361 (DASL…IVGN). 6 consecutive transmembrane segments (helical) span residues 371–391 (MLPV…PFYL), 394–414 (FPAA…LILA), 439–459 (IVLF…DTLV), 464–484 (LSWM…VGFL), 493–513 (YLTI…LAFA), and 532–552 (PLVM…LWAV).

It belongs to the AAE transporter (TC 2.A.81) family. YidE subfamily.

The protein resides in the cell membrane. The chain is Putative transport protein PBPRA2144 from Photobacterium profundum (strain SS9).